We begin with the raw amino-acid sequence, 88 residues long: Cell division topological specificity factor (88 aa).

It belongs to the MinE family.

In terms of biological role, prevents the cell division inhibition by proteins MinC and MinD at internal division sites while permitting inhibition at polar sites. This ensures cell division at the proper site by restricting the formation of a division septum at the midpoint of the long axis of the cell. The polypeptide is Cell division topological specificity factor (Pseudoalteromonas translucida (strain TAC 125)).